Reading from the N-terminus, the 886-residue chain is Methanogenesis regulatory histidine kinase FilI (886 aa).

The next 2 membrane-spanning stretches (helical) occupy residues 7 to 27 (ILAFTGGMILVLALICSTFMC) and 270 to 290 (VVGIFLASLLFGGLILLFLEL). The region spanning 290 to 344 (LSILMPLATITSSVEAIREQEKGQGSRIPTVGPAELATLAESINEMLDHLESYNQ) is the HAMP domain. The PAS domain maps to 349–419 (SEKRFRTIVD…EKDAGVLSGE (71 aa)). The region spanning 421–473 (FVGEVSAHTRAGSSMTFHAVKVPLRDDRGQVTGICGIARDITDIKEAGVELLK) is the PAC domain. Positions 674-886 (TVSHDLRSPL…TCVLFTLPTP (213 aa)) constitute a Histidine kinase domain. Histidine 677 is subject to Phosphohistidine; by autocatalysis.

Post-translationally, autophosphorylated.

It localises to the cell membrane. The enzyme catalyses ATP + protein L-histidine = ADP + protein N-phospho-L-histidine.. In terms of biological role, member of the two-component regulatory system FilI/FilRs, which is involved in the regulation of methanogenesis. Autophosphorylates and specifically transfers the phosphoryl group to both FilR1 and FilR2. Could also catalyze the synthesis of the quorum sensing (QS) signal molecules carboxyl-acyl homoserine lactones (AHLs), which regulate the transition of the cellular morphology from short cells to filaments and of the carbon metabolic flux from biomass formation to methane production. The protein is Methanogenesis regulatory histidine kinase FilI of Methanothrix harundinacea (strain 6Ac) (Methanosaeta harundinacea).